Reading from the N-terminus, the 937-residue chain is Isoleucine--tRNA ligase (937 aa).

Positions 58–68 (PYANGTLHLGH) match the 'HIGH' region motif. E561 is an L-isoleucyl-5'-AMP binding site. The 'KMSKS' region signature appears at 602–606 (KMSKS). K605 serves as a coordination point for ATP. Zn(2+)-binding residues include C900, C903, C920, and C923.

This sequence belongs to the class-I aminoacyl-tRNA synthetase family. IleS type 1 subfamily. Monomer. It depends on Zn(2+) as a cofactor.

The protein localises to the cytoplasm. It carries out the reaction tRNA(Ile) + L-isoleucine + ATP = L-isoleucyl-tRNA(Ile) + AMP + diphosphate. Its function is as follows. Catalyzes the attachment of isoleucine to tRNA(Ile). As IleRS can inadvertently accommodate and process structurally similar amino acids such as valine, to avoid such errors it has two additional distinct tRNA(Ile)-dependent editing activities. One activity is designated as 'pretransfer' editing and involves the hydrolysis of activated Val-AMP. The other activity is designated 'posttransfer' editing and involves deacylation of mischarged Val-tRNA(Ile). The polypeptide is Isoleucine--tRNA ligase (Histophilus somni (strain 2336) (Haemophilus somnus)).